A 99-amino-acid polypeptide reads, in one-letter code: Photosystem II reaction center Psb28 protein (99 aa).

The protein belongs to the Psb28 family. In terms of assembly, part of the photosystem II complex.

It is found in the cell inner membrane. The chain is Photosystem II reaction center Psb28 protein from Gloeobacter violaceus (strain ATCC 29082 / PCC 7421).